The following is a 373-amino-acid chain: UPF0725 protein At1g23950 (373 aa).

Thr2 carries the post-translational modification N-acetylthreonine.

Belongs to the UPF0725 (EMB2204) family.

This is UPF0725 protein At1g23950 from Arabidopsis thaliana (Mouse-ear cress).